We begin with the raw amino-acid sequence, 214 residues long: Probable GTP-binding protein EngB (214 aa).

The region spanning 30–204 (EGFEVAFAGR…YTVLAGWMEL (175 aa)) is the EngB-type G domain. Residues 38–45 (GRSNAGKS), 64–68 (GRTQL), 82–85 (DLPG), 149–152 (TKAD), and 182–185 (LFSA) each bind GTP. Mg(2+)-binding residues include serine 45 and threonine 66.

Belongs to the TRAFAC class TrmE-Era-EngA-EngB-Septin-like GTPase superfamily. EngB GTPase family. It depends on Mg(2+) as a cofactor.

Its function is as follows. Necessary for normal cell division and for the maintenance of normal septation. The polypeptide is Probable GTP-binding protein EngB (Pseudomonas fluorescens (strain Pf0-1)).